Reading from the N-terminus, the 180-residue chain is Ribulose bisphosphate carboxylase small subunit, chloroplastic 3 (180 aa).

The N-terminal 56 residues, Met-1–Gln-56, are a transit peptide targeting the chloroplast.

This sequence belongs to the RuBisCO small chain family. Heterohexadecamer of 8 large and 8 small subunits.

It localises to the plastid. The protein resides in the chloroplast. Its function is as follows. RuBisCO catalyzes two reactions: the carboxylation of D-ribulose 1,5-bisphosphate, the primary event in carbon dioxide fixation, as well as the oxidative fragmentation of the pentose substrate. Both reactions occur simultaneously and in competition at the same active site. Although the small subunit is not catalytic it is essential for maximal activity. This Amaranthus hypochondriacus (Prince-of-Wales feather) protein is Ribulose bisphosphate carboxylase small subunit, chloroplastic 3.